We begin with the raw amino-acid sequence, 217 residues long: Protein-L-isoaspartate O-methyltransferase (217 aa).

Residue Ser61 is part of the active site.

This sequence belongs to the methyltransferase superfamily. L-isoaspartyl/D-aspartyl protein methyltransferase family.

It is found in the cytoplasm. It carries out the reaction [protein]-L-isoaspartate + S-adenosyl-L-methionine = [protein]-L-isoaspartate alpha-methyl ester + S-adenosyl-L-homocysteine. In terms of biological role, catalyzes the methyl esterification of L-isoaspartyl residues in peptides and proteins that result from spontaneous decomposition of normal L-aspartyl and L-asparaginyl residues. It plays a role in the repair and/or degradation of damaged proteins. This chain is Protein-L-isoaspartate O-methyltransferase, found in Brucella anthropi (strain ATCC 49188 / DSM 6882 / CCUG 24695 / JCM 21032 / LMG 3331 / NBRC 15819 / NCTC 12168 / Alc 37) (Ochrobactrum anthropi).